Reading from the N-terminus, the 367-residue chain is MYPPPPSSIYAPPMLVNCSGCRTPLQLPSGARSIRCALCQAVTHIADPRTAPPPQPSSAPSPPPQIHAPPGQLPHPHGRKRAVICGISYRFSRHELKGCINDAKCMRHLLINKFKFSPDSILMLTEEETDPYRIPTKQNMRMALYWLVQGCTAGDSLVFHYSGHGSRQRNYNGDEVDGYDETLCPLDFETQGMIVDDEINATIVRPLPHGVKLHSIIDACHSGTVLDLPFLCRMNRAGQYVWEDHRPRSGLWKGTAGGEAISISGCDDDQTSADTSALSKITSTGAMTFCFIQAIERSAQGTTYGSLLNSMRTTIRNTGNDGGGSGGVVTTVLSMLLTGGSAIGGLRQEPQLTACQTFDVYAKPFTL.

The segment at Asp-47–His-77 is disordered. Residues Thr-50–Leu-73 are compositionally biased toward pro residues. Catalysis depends on residues His-164 and Cys-220.

It belongs to the peptidase C14B family. As to quaternary structure, interacts (via N-terminus) with LSD1. Proteolytically processed; by an autocatalytic mechanism.

Cysteine protease that cleaves specifically after arginine or lysine residues. Does not cleave caspase-specific substrates. Acts as a positive regulator of cell death. Required for both oxidative stress cell death response and hypersensitive cell death response mediated by immune response. The protein is Metacaspase-1 (AMC1) of Arabidopsis thaliana (Mouse-ear cress).